A 149-amino-acid chain; its full sequence is Ribosome-binding factor A (149 aa).

Basic and acidic residues predominate over residues 116-125 (TLFEELHPNP). Residues 116–149 (TLFEELHPNPEEDDGDTDAETLLEDSESGIERET) form a disordered region. The span at 126–143 (EEDDGDTDAETLLEDSES) shows a compositional bias: acidic residues.

Belongs to the RbfA family. In terms of assembly, monomer. Binds 30S ribosomal subunits, but not 50S ribosomal subunits or 70S ribosomes.

The protein localises to the cytoplasm. In terms of biological role, one of several proteins that assist in the late maturation steps of the functional core of the 30S ribosomal subunit. Associates with free 30S ribosomal subunits (but not with 30S subunits that are part of 70S ribosomes or polysomes). Required for efficient processing of 16S rRNA. May interact with the 5'-terminal helix region of 16S rRNA. The sequence is that of Ribosome-binding factor A from Leptospira biflexa serovar Patoc (strain Patoc 1 / Ames).